Reading from the N-terminus, the 178-residue chain is ATP synthase subunit delta (178 aa).

It belongs to the ATPase delta chain family. As to quaternary structure, F-type ATPases have 2 components, F(1) - the catalytic core - and F(0) - the membrane proton channel. F(1) has five subunits: alpha(3), beta(3), gamma(1), delta(1), epsilon(1). F(0) has three main subunits: a(1), b(2) and c(10-14). The alpha and beta chains form an alternating ring which encloses part of the gamma chain. F(1) is attached to F(0) by a central stalk formed by the gamma and epsilon chains, while a peripheral stalk is formed by the delta and b chains.

Its subcellular location is the cell membrane. Its function is as follows. F(1)F(0) ATP synthase produces ATP from ADP in the presence of a proton or sodium gradient. F-type ATPases consist of two structural domains, F(1) containing the extramembraneous catalytic core and F(0) containing the membrane proton channel, linked together by a central stalk and a peripheral stalk. During catalysis, ATP synthesis in the catalytic domain of F(1) is coupled via a rotary mechanism of the central stalk subunits to proton translocation. This protein is part of the stalk that links CF(0) to CF(1). It either transmits conformational changes from CF(0) to CF(1) or is implicated in proton conduction. The protein is ATP synthase subunit delta of Buchnera aphidicola subsp. Baizongia pistaciae (strain Bp).